The following is a 276-amino-acid chain: tRNA dimethylallyltransferase (276 aa).

Residues 9-12 are interaction with substrate tRNA; the sequence is DSLS.

This sequence belongs to the IPP transferase family. Monomer. Mg(2+) serves as cofactor.

The catalysed reaction is adenosine(37) in tRNA + dimethylallyl diphosphate = N(6)-dimethylallyladenosine(37) in tRNA + diphosphate. Functionally, catalyzes the transfer of a dimethylallyl group onto the adenine at position 37 in tRNAs that read codons beginning with uridine, leading to the formation of N6-(dimethylallyl)adenosine (i(6)A). This Helicobacter pylori (strain Shi470) protein is tRNA dimethylallyltransferase (miaA).